The following is a 214-amino-acid chain: tRNA (guanine-N(7)-)-methyltransferase (214 aa).

S-adenosyl-L-methionine-binding residues include E43, E68, D95, and D117. D117 is an active-site residue. Substrate-binding positions include K121, D153, and 190-193; that span reads TEYE.

The protein belongs to the class I-like SAM-binding methyltransferase superfamily. TrmB family.

It carries out the reaction guanosine(46) in tRNA + S-adenosyl-L-methionine = N(7)-methylguanosine(46) in tRNA + S-adenosyl-L-homocysteine. The protein operates within tRNA modification; N(7)-methylguanine-tRNA biosynthesis. In terms of biological role, catalyzes the formation of N(7)-methylguanine at position 46 (m7G46) in tRNA. This Staphylococcus haemolyticus (strain JCSC1435) protein is tRNA (guanine-N(7)-)-methyltransferase.